Reading from the N-terminus, the 453-residue chain is Glucose N-acetyltransferase 1-B (453 aa).

Residues Met1 to Tyr8 are Cytoplasmic-facing. A helical; Signal-anchor for type II membrane protein transmembrane segment spans residues Leu9–Phe29. Topologically, residues Gln30–Asn453 are lumenal. N-linked (GlcNAc...) asparagine glycans are attached at residues Asn108, Asn126, and Asn176. A DXD motif is present at residues Asp187–Asp189.

This sequence belongs to the GNT1 family.

It is found in the golgi apparatus membrane. It localises to the vacuole membrane. N-acetylglucosaminyltransferase involved in the Golgi-specific modification of N-linked glycans. This Kluyveromyces lactis (strain ATCC 8585 / CBS 2359 / DSM 70799 / NBRC 1267 / NRRL Y-1140 / WM37) (Yeast) protein is Glucose N-acetyltransferase 1-B (GNT1-B).